The primary structure comprises 132 residues: Interleukin-13 (132 aa).

An N-terminal signal peptide occupies residues 1–18 (MALLLTTVIALTCLGGFA). Residues asparagine 38, asparagine 49, asparagine 57, and asparagine 72 are each glycosylated (N-linked (GlcNAc...) asparagine). Cystine bridges form between cysteine 48–cysteine 76 and cysteine 64–cysteine 90.

This sequence belongs to the IL-4/IL-13 family. In terms of assembly, interacts with IL13RA2.

It is found in the secreted. Cytokine that plays important roles in allergic inflammation and immune response to parasite infection. Synergizes with IL2 in regulating interferon-gamma synthesis. Stimulates B-cell proliferation, and activation of eosinophils, basophils, and mast cells. Plays an important role in controlling IL33 activity by modulating the production of transmembrane and soluble forms of interleukin-1 receptor-like 1/IL1RL1. Displays the capacity to antagonize Th1-driven proinflammatory immune response and downregulates synthesis of many proinflammatory cytokines including IL1, IL6, IL10, IL12 and TNF-alpha through a mechanism that partially involves suppression of NF-kappa-B. Also functions on nonhematopoietic cells, including endothelial cells where it induces vascular cell adhesion protein 1/VCAM1, which is important in the recruitment of eosinophils. Exerts its biological effects through its receptors which comprises the IL4R chain and the IL13RA1 chain, to activate JAK1 and TYK2, leading to the activation of STAT6. Aside from IL13RA1, another receptor IL13RA2 acts as a high affinity decoy for IL13 and mediates internalization and depletion of extracellular IL13. The protein is Interleukin-13 (IL13) of Pan troglodytes (Chimpanzee).